The primary structure comprises 172 residues: Calcium channel flower homolog (172 aa).

The Cytoplasmic portion of the chain corresponds to 1–32; it reads MSSSGGAPGASASSAPPAQEEGMTWWYRWLCR. A helical membrane pass occupies residues 33–53; the sequence is LSGVLGAVSCAISGLFNCITI. Residues 54–57 are Extracellular-facing; the sequence is HPLN. Residues 58-78 form a helical membrane-spanning segment; that stretch reads IAAGVWMIMNAFILLLCEAPF. The Cytoplasmic portion of the chain corresponds to 79 to 102; it reads CCQFIEFANTVAEKVDRLRSWQKA. A helical transmembrane segment spans residues 103-123; the sequence is VFYCGMAVVPIVISLTLTTLL. Residues 124–125 are Extracellular-facing; the sequence is GN. A helical membrane pass occupies residues 126-142; it reads AIAFATGVLYGLSALGK. The Cytoplasmic segment spans residues 143-172; it reads KGDAISYARIQQQRQQADEEKLAETLEGEL.

Belongs to the calcium channel flower family. As to quaternary structure, interacts with adaptor protein complex 2 (AP-2). As to expression, detected in skin cells at low levels of expression (at protein level).

It is found in the cell membrane. Its subcellular location is the cytoplasmic vesicle. The protein localises to the secretory vesicle. It localises to the synaptic vesicle. The protein resides in the golgi apparatus. It is found in the vesicle. Its subcellular location is the early endosome. The protein localises to the recycling endosome. It localises to the endoplasmic reticulum membrane. Its function is as follows. Transmembrane protein which mediates synaptic endocytosis and fitness-based cell culling. In response to different stimulus strengths, controls two major modes of synaptic vesicle (SV) retrieval in hippocampal neurons; Clathrin-mediated endocytosis (CME) in response to mild stimulation and activity-dependent bulk endocytosis (ADBE) in response to strong stimulation. In cytotoxic T-lymphoocytes (CTLs) facilitates calcium-dependent endocytosis of cytotoxic granules at the immuno synapse. Different isoforms work as fitness fingerprints in 'loser' and 'winner' cells and thereby mediate win/lose decisions as part of the cell competition process. In terms of biological role, functions with the other flower isoforms to produce tissue-specific fitness fingerprints that identify unfit or fit cells during cell selection processes in order to maintain tissue health. During cell competition, if levels of this isoform in cells is higher than in the surrounding neighboring cells, the cells are recognized as 'winner' cells, and do not undergo elimination via apoptosis. Functionally, functions with the other flower isoforms to produce tissue-specific fitness fingerprints that identify unfit or fit cells during cell selection processes in order to maintain tissue health. During cell competition, if levels of this isoform in unfit cells is higher than in the surrounding neighboring cells, the cells are recognized as 'loser' cells, and undergo elimination via apoptosis to be replaced by the surrounding healthy 'winner' cell population. This chain is Calcium channel flower homolog (CACFD1), found in Homo sapiens (Human).